A 316-amino-acid polypeptide reads, in one-letter code: Small ribosomal subunit biogenesis GTPase RsgA (316 aa).

The segment at 1 to 20 is disordered; the sequence is MSKLSHQQQRRIHNHRQNKL. Basic residues predominate over residues 8–18; sequence QQRRIHNHRQN. One can recognise a CP-type G domain in the interval 92-251; it reads AGKLKPVASN…IIDTPGVRGF (160 aa). Residues 139-142 and 193-201 contribute to the GTP site; these read NKSD and GQSGVGKSS. Residues C275, C280, H282, and C288 each contribute to the Zn(2+) site.

Belongs to the TRAFAC class YlqF/YawG GTPase family. RsgA subfamily. As to quaternary structure, monomer. Associates with 30S ribosomal subunit, binds 16S rRNA. Requires Zn(2+) as cofactor.

Its subcellular location is the cytoplasm. Functionally, one of several proteins that assist in the late maturation steps of the functional core of the 30S ribosomal subunit. Helps release RbfA from mature subunits. May play a role in the assembly of ribosomal proteins into the subunit. Circularly permuted GTPase that catalyzes slow GTP hydrolysis, GTPase activity is stimulated by the 30S ribosomal subunit. The polypeptide is Small ribosomal subunit biogenesis GTPase RsgA (Dichelobacter nodosus (strain VCS1703A)).